A 60-amino-acid polypeptide reads, in one-letter code: Large ribosomal subunit protein bL32 (60 aa).

Positions 1–28 (MAVQQNKKSRSKRDMRRSHDALTGPTLS) are disordered. Positions 7–16 (KKSRSKRDMR) are enriched in basic residues.

The protein belongs to the bacterial ribosomal protein bL32 family.

The polypeptide is Large ribosomal subunit protein bL32 (Cellvibrio japonicus (strain Ueda107) (Pseudomonas fluorescens subsp. cellulosa)).